A 71-amino-acid chain; its full sequence is DNA-directed RNA polymerase subunit epsilon (71 aa).

The protein belongs to the RNA polymerase subunit epsilon family. RNAP is composed of a core of 2 alpha, a beta and a beta' subunit. The core is associated with a delta subunit, and at least one of epsilon or omega. When a sigma factor is associated with the core the holoenzyme is formed, which can initiate transcription.

It catalyses the reaction RNA(n) + a ribonucleoside 5'-triphosphate = RNA(n+1) + diphosphate. A non-essential component of RNA polymerase (RNAP). The protein is DNA-directed RNA polymerase subunit epsilon of Geobacillus thermodenitrificans (strain NG80-2).